Reading from the N-terminus, the 462-residue chain is GTPase Der (462 aa).

2 EngA-type G domains span residues K9–K171 and I201–S372. Residues G15–S22, D62–M66, N123–D126, G207–S214, D254–I258, and N318–D321 contribute to the GTP site. Residues K373–K457 enclose the KH-like domain.

It belongs to the TRAFAC class TrmE-Era-EngA-EngB-Septin-like GTPase superfamily. EngA (Der) GTPase family. As to quaternary structure, associates with the 50S ribosomal subunit.

Functionally, GTPase that plays an essential role in the late steps of ribosome biogenesis. The chain is GTPase Der from Helicobacter acinonychis (strain Sheeba).